Consider the following 775-residue polypeptide: Protein U58 (775 aa).

Belongs to the herpesviridae UL87 family.

The sequence is that of Protein U58 (U58) from Homo sapiens (Human).